The chain runs to 577 residues: Chaperonin CPN60-1, mitochondrial (577 aa).

The N-terminal 34 residues, 1–34, are a transit peptide targeting the mitochondrion; the sequence is MYRAAASLASKARQAGNSLATRQVGSRLAWSRNY.

This sequence belongs to the chaperonin (HSP60) family.

It is found in the mitochondrion. Implicated in mitochondrial protein import and macromolecular assembly. May facilitate the correct folding of imported proteins. May also prevent misfolding and promote the refolding and proper assembly of unfolded polypeptides generated under stress conditions in the mitochondrial matrix. This Zea mays (Maize) protein is Chaperonin CPN60-1, mitochondrial (CPN60I).